A 64-amino-acid polypeptide reads, in one-letter code: Large ribosomal subunit protein bL35 (64 aa).

Composition is skewed to basic residues over residues 1–15 and 23–42; these read MPKA…KRFR and VRQK…KRTR. A disordered region spans residues 1–45; that stretch reads MPKAKTHSGASKRFRTTGSGKVVRQKANRRHLLEHKPTKRTRRLD.

It belongs to the bacterial ribosomal protein bL35 family.

The chain is Large ribosomal subunit protein bL35 from Mycolicibacterium vanbaalenii (strain DSM 7251 / JCM 13017 / BCRC 16820 / KCTC 9966 / NRRL B-24157 / PYR-1) (Mycobacterium vanbaalenii).